A 189-amino-acid polypeptide reads, in one-letter code: Lumazine protein (189 aa).

Lumazine-binding repeat units follow at residues 1-96 and 97-189; these read MFKG…LGKG and ALTG…SNEW.

It depends on 6,7-dimethyl-8-(1-D-ribityl)lumazine as a cofactor.

Functionally, antenna protein that modulates the color of the bioluminescence emission of the luciferase. In the presence of LumP, luciferase emission is shifted to higher energy values (shorter wavelength). This chain is Lumazine protein (luxL), found in Photobacterium phosphoreum.